We begin with the raw amino-acid sequence, 114 residues long: Ribonuclease P protein component (114 aa).

The protein belongs to the RnpA family. As to quaternary structure, consists of a catalytic RNA component (M1 or rnpB) and a protein subunit.

The catalysed reaction is Endonucleolytic cleavage of RNA, removing 5'-extranucleotides from tRNA precursor.. RNaseP catalyzes the removal of the 5'-leader sequence from pre-tRNA to produce the mature 5'-terminus. It can also cleave other RNA substrates such as 4.5S RNA. The protein component plays an auxiliary but essential role in vivo by binding to the 5'-leader sequence and broadening the substrate specificity of the ribozyme. This Legionella pneumophila (strain Lens) protein is Ribonuclease P protein component.